We begin with the raw amino-acid sequence, 138 residues long: Large ribosomal subunit protein uL16 (138 aa).

This sequence belongs to the universal ribosomal protein uL16 family. Part of the 50S ribosomal subunit.

Functionally, binds 23S rRNA and is also seen to make contacts with the A and possibly P site tRNAs. In Rhodospirillum rubrum (strain ATCC 11170 / ATH 1.1.1 / DSM 467 / LMG 4362 / NCIMB 8255 / S1), this protein is Large ribosomal subunit protein uL16.